Consider the following 22-residue polypeptide: Unknown endosperm protein L (22 aa).

The segment covering 1 to 11 has biased composition (basic and acidic residues); sequence MRHSNKIRDEE. Positions 1–22 are disordered; that stretch reads MRHSNKIRDEEMVNNTRLNXXA. Over residues 13–22 the composition is skewed to polar residues; that stretch reads VNNTRLNXXA.

In terms of processing, the N-terminus is blocked.

The sequence is that of Unknown endosperm protein L from Hordeum vulgare (Barley).